Here is a 382-residue protein sequence, read N- to C-terminus: Cell division protein DivIB (382 aa).

The Cytoplasmic portion of the chain corresponds to 1–103 (MAKDKEKQSD…SATQIAFQKS (103 aa)). Composition is skewed to basic and acidic residues over residues 36–49 (EKKL…DKKA) and 60–70 (VELKTDEKTDS). A disordered region spans residues 36–92 (EKKLKEKLLSDKKAQQQAQNASEAVELKTDEKTDSQEIESETTSKPKKTKKVRQPKE). The chain crosses the membrane as a helical span at residues 104 to 124 (LPVLLGALLLMAVSIFMITPY). Residues 125 to 196 (SKKKEFSVRG…NHFLFNVIEF (72 aa)) form the POTRA domain. Residues 125-382 (SKKKEFSVRG…PETVLEQAHG (258 aa)) lie on the Extracellular side of the membrane. Positions 322 to 382 (QEIENQPEVP…PETVLEQAHG (61 aa)) are disordered. Residues 338–352 (AADKEGDKPGEHQEQ) are compositionally biased toward basic and acidic residues.

This sequence belongs to the FtsQ/DivIB family. DivIB subfamily.

It is found in the cell membrane. Its function is as follows. Cell division protein that may be involved in stabilizing or promoting the assembly of the division complex. The sequence is that of Cell division protein DivIB from Streptococcus pyogenes serotype M2 (strain MGAS10270).